The primary structure comprises 496 residues: Ankyrin repeat domain-containing protein 34A (496 aa).

ANK repeat units lie at residues Thr4–Glu33, Gln37–Ile72, Leu76–Val106, and Ala110–Thr139. An N5-methylglutamine modification is found at Gln15. Composition is skewed to polar residues over residues Asp147–Ser162 and Phe180–Thr191. The segment at Asp147–Ser473 is disordered. A compositionally biased stretch (basic and acidic residues) spans Ala204–Phe214. A compositionally biased stretch (pro residues) spans Leu218 to Lys233. Residues Pro234 to Lys243 show a composition bias toward basic residues. Thr316 carries the phosphothreonine modification. Over residues Arg463–Ser473 the composition is skewed to basic residues.

This sequence belongs to the ANKRD34 family. Post-translationally, methylated at Gln-15 by N6AMT1.

The sequence is that of Ankyrin repeat domain-containing protein 34A (ANKRD34A) from Homo sapiens (Human).